The following is a 372-amino-acid chain: Prostaglandin E synthase 2 (372 aa).

At 1–54 (MAHAVRALWPHGRALAWRLGDRPALGLHAQSRAGFTGAAGGSGPAATARKGGPR) the chain is on the lumenal side. A helical membrane pass occupies residues 55-71 (LLGAAALALGGALGLYH). Over 72-372 (TARWHLRAQD…VEKAIAEAPQ (301 aa)) the chain is Cytoplasmic. Residues 87–190 (SATQLSLSSR…DIITYYPPMK (104 aa)) form the Glutaredoxin domain. A Phosphoserine modification is found at serine 92. Residues valine 145 and 161–162 (DS) contribute to the glutathione site. The GST C-terminal domain occupies 259-372 (DYIVKEGNFG…VEKAIAEAPQ (114 aa)).

It belongs to the GST superfamily. As to quaternary structure, may interact with CEBPB. Interacts with EXOSC10. Homodimer. In terms of processing, synthesized as a Golgi membrane-associated protein, and the proteolytic removal of the N-terminal hydrophobic domain leads to the formation of a mature cytosolic enzyme. As to expression, detected in heart (at protein level). Widely expressed. Expressed in heart &gt; kidney &gt; muscle &gt; testis &gt; endometrium = ovary &gt; myometrium = spleen = lung. In endometrium, it is mainly expressed in luminal epithelial cells followed by glandular epithelial cells, but expression is also present in stromal cells at a lower level.

It is found in the microsome membrane. The protein localises to the cytoplasm. The enzyme catalyses prostaglandin H2 = prostaglandin E2. The catalysed reaction is prostaglandin H2 = (12S)-hydroxy-(5Z,8E,10E)-heptadecatrienoate + malonaldehyde. The protein operates within lipid metabolism; prostaglandin biosynthesis. Isomerase activity is increased by sulfhydril compounds. Dithiothreitol (DTT) is most effective, followed by glutathione (GSH) and 2-mercaptoethanol. In terms of biological role, isomerase that catalyzes the conversion of PGH2 into the more stable prostaglandin E2 (PGE2) (in vitro). The biological function and the GSH-dependent property of PTGES2 is still under debate. In vivo, PTGES2 could form a complex with GSH and heme and would not participate in PGE2 synthesis but would catalyze the degradation of prostaglandin E2 H2 (PGH2) to 12(S)-hydroxy-5(Z),8(E),10(E)-heptadecatrienoic acid (HHT) and malondialdehyde (MDA). The protein is Prostaglandin E synthase 2 (PTGES2) of Bos taurus (Bovine).